The sequence spans 335 residues: Large ribosomal subunit protein uL10 (335 aa).

The interval 304 to 335 (GAAAPVEEAPVEEKKEEKKEEAAAPAGLGMLF) is disordered. Positions 314-325 (VEEKKEEKKEEA) are enriched in basic and acidic residues.

The protein belongs to the universal ribosomal protein uL10 family. Part of the 50S ribosomal subunit. Homodimer, it forms part of the ribosomal stalk which helps the ribosome interact with GTP-bound translation factors. Forms both a pentameric L10(L12)2(L12)2 and heptameric L10(L12)2(L12)2(L12)2 complex, where L10 forms an elongated spine to which the L12 dimers bind in a sequential fashion. The proportion of heptameric complexes increases during cell growth.

Functionally, forms part of the ribosomal stalk, playing a central role in the interaction of the ribosome with GTP-bound translation factors. This is Large ribosomal subunit protein uL10 from Methanococcus maripaludis (strain DSM 14266 / JCM 13030 / NBRC 101832 / S2 / LL).